Here is a 335-residue protein sequence, read N- to C-terminus: Probable calcium-binding protein CML49 (335 aa).

The span at 1 to 10 (MSGYPPSSQG) shows a compositional bias: low complexity. Positions 1-154 (MSGYPPSSQG…PQASYGSPFA (154 aa)) are disordered. Positions 30 to 45 (NPPPYGSSGSNPPPPY) are enriched in pro residues. Residues 46–63 (GSSASSPYAVPYGAQPAP) show a composition bias toward low complexity. A compositionally biased stretch (gly residues) spans 110–141 (DYGGYGGAPQQSGHGGGYGGAPQQSGHGGGYG). 2 consecutive EF-hand domains span residues 164-199 (GTDP…YNQS) and 230-265 (FSLQ…LGFS). Ca(2+) contacts are provided by Asp177, Asp179, Ser181, Glu188, Asp243, Asp245, Ser247, Arg249, and Glu254.

Functionally, potential calcium sensor. The polypeptide is Probable calcium-binding protein CML49 (CML49) (Arabidopsis thaliana (Mouse-ear cress)).